Here is an 819-residue protein sequence, read N- to C-terminus: Advillin (819 aa).

The core stretch occupies residues 1 to 731 (MSLSSAFRTV…YEQLKNELGD (731 aa)). A Gelsolin-like 1 repeat occupies 24-105 (MELVLVPLSA…VQYHESDTFR (82 aa)). Tyr85 carries the phosphotyrosine modification. A 1,2-diacyl-sn-glycero-3-phospho-(1D-myo-inositol-4,5-bisphosphate) contacts are provided by residues 109–116 (KRGIIYKK) and 135–143 (RLLHVKGKR). 5 Gelsolin-like repeats span residues 144-215 (NIRA…KEAA), 265-339 (TEVA…SAMF), 407-486 (LVPV…RHFM), 524-592 (NTKA…PEFW), and 631-704 (TEVT…PPTF). Residues 628 to 819 (FLVTEVTDFT…LQLKKEAGLF (192 aa)) form a required for interaction with F-actin region. Residues 731 to 819 (DATAIVRITT…LQLKKEAGLF (89 aa)) are headpiece. Residues 753 to 819 (ESGPKYYPVE…LQLKKEAGLF (67 aa)) form the HP domain. The residue at position 758 (Tyr758) is a Phosphotyrosine.

This sequence belongs to the villin/gelsolin family. Associates (via C-terminus) with actin. Interacts with F-actin. Interacts with SCARF1; the interaction occurs in embryonic dorsal root ganglions at 18 dpc and induces neurite-like outgrowth. Interacts with PLCE1. Interacts with ACTR2 and ACTR3; associates with the ARP2/3 complex. As to expression, expressed in dorsal root ganglion (DRG) neurons and superior cervical ganglia (SCG). Expressed in podocytes.

It localises to the cytoplasm. The protein resides in the cytoskeleton. It is found in the cell projection. The protein localises to the neuron projection. Its subcellular location is the axon. It localises to the lamellipodium. The protein resides in the cell junction. It is found in the focal adhesion. Ca(2+)-regulated actin-binding protein which plays an important role in actin bundling. May have a unique function in the morphogenesis of neuronal cells which form ganglia. Required for SREC1-mediated regulation of neurite-like outgrowth. Plays a role in regenerative sensory axon outgrowth and remodeling processes after peripheral injury in neonates. Involved in the formation of long fine actin-containing filopodia-like structures in fibroblast. Plays a role in ciliogenesis. In podocytes, controls lamellipodia formation through the regulation of EGF-induced diacylglycerol generation by PLCE1 and ARP2/3 complex assembly. The chain is Advillin from Rattus norvegicus (Rat).